Reading from the N-terminus, the 401-residue chain is Nuclear rim protein 1 (401 aa).

2 helical membrane passes run 146–166 (LLLF…WTFI) and 256–274 (FLTS…FLIL).

Belongs to the NUR1 family.

The protein resides in the nucleus membrane. In terms of biological role, member of a perinuclear network that controls recombination at multiple loci to maintain genome stability. Required for rDNA repeat stability. The chain is Nuclear rim protein 1 (NUR1) from Vanderwaltozyma polyspora (strain ATCC 22028 / DSM 70294 / BCRC 21397 / CBS 2163 / NBRC 10782 / NRRL Y-8283 / UCD 57-17) (Kluyveromyces polysporus).